A 159-amino-acid chain; its full sequence is Ribosomal RNA large subunit methyltransferase H (159 aa).

S-adenosyl-L-methionine contacts are provided by residues Leu76, Gly108, and 127–132 (FSKMTL).

The protein belongs to the RNA methyltransferase RlmH family. As to quaternary structure, homodimer.

The protein resides in the cytoplasm. It carries out the reaction pseudouridine(1915) in 23S rRNA + S-adenosyl-L-methionine = N(3)-methylpseudouridine(1915) in 23S rRNA + S-adenosyl-L-homocysteine + H(+). In terms of biological role, specifically methylates the pseudouridine at position 1915 (m3Psi1915) in 23S rRNA. The polypeptide is Ribosomal RNA large subunit methyltransferase H (Bacillus cereus (strain ATCC 10987 / NRS 248)).